Reading from the N-terminus, the 931-residue chain is Up-regulator of cell proliferation (931 aa).

Residue S3 is modified to Phosphoserine. In terms of domain architecture, VLIG-type G spans 689 to 929 (RSRLVVLSTV…NIQQLIELVR (241 aa)).

The protein belongs to the TRAFAC class dynamin-like GTPase superfamily. Very large inducible GTPase (VLIG) family. In terms of tissue distribution, strongly expressed in hepatitis B virus-infected liver and in HCC cells. Also highly expressed in well-differentiated gastric cancer tissues and various gastric cancer cell lines.

It is found in the cytoplasm. The protein resides in the nucleus. Functionally, may be involved in cell cycle progression through the regulation of cyclin D1 expression. May participate in the development of hepatocellular carcinoma (HCC) by promoting hepatocellular growth and survival. May play an important role in development of gastric cancer. The protein is Up-regulator of cell proliferation (URGCP) of Homo sapiens (Human).